We begin with the raw amino-acid sequence, 32 residues long: uncharacterized protein (32 aa).

This is an uncharacterized protein from Enterobacteria phage T4 (Bacteriophage T4).